The following is a 258-amino-acid chain: MGLSGKNVIFVGGLGFIGYEACKQLMAKNMASFFVFDVLDKPEDIKALQALNPKTKVYYTKFDITSKQSIKSALADVVSKVKYIDALINGAGILTDLNVELTMNINLIGLINTTLEGLPLMDKNKQGRGGVIVNIASVLGLEPCPPAAAYCASKFGVMGFSRSIGDPYYYNITGVAVVTFCPGLTETPLKNNIGSKYTFEYSKKISEELNNTKTQKPEVCGAHLAQVVESHENGGIYISNQGTLAKVTPTVYWQPTYH.

9–33 serves as a coordination point for NAD(+); the sequence is IFVGGLGFIGYEACKQLMAKNMASF. Substrate is bound at residue Ser-137. The active-site Proton acceptor is Tyr-150.

Belongs to the short-chain dehydrogenases/reductases (SDR) family. Homodimer.

The enzyme catalyses a primary alcohol + NAD(+) = an aldehyde + NADH + H(+). It catalyses the reaction a secondary alcohol + NAD(+) = a ketone + NADH + H(+). This Ceratitis rosa (Natal fruit fly) protein is Alcohol dehydrogenase 2 (ADH2).